A 245-amino-acid chain; its full sequence is 23S rRNA (guanosine-2'-O-)-methyltransferase RlmB (245 aa).

The S-adenosyl-L-methionine site is built by glycine 197, isoleucine 217, and leucine 226.

It belongs to the class IV-like SAM-binding methyltransferase superfamily. RNA methyltransferase TrmH family. RlmB subfamily.

The protein resides in the cytoplasm. The enzyme catalyses guanosine(2251) in 23S rRNA + S-adenosyl-L-methionine = 2'-O-methylguanosine(2251) in 23S rRNA + S-adenosyl-L-homocysteine + H(+). Specifically methylates the ribose of guanosine 2251 in 23S rRNA. The chain is 23S rRNA (guanosine-2'-O-)-methyltransferase RlmB from Photobacterium profundum (strain SS9).